A 54-amino-acid polypeptide reads, in one-letter code: uncharacterized protein (54 aa).

A helical transmembrane segment spans residues Leu32–Ile52.

It is found in the host membrane. This is an uncharacterized protein from Cassava vein mosaic virus (CsVMV).